Here is a 719-residue protein sequence, read N- to C-terminus: Phosphoribosylformylglycinamidine synthase subunit PurL (719 aa).

The active site involves histidine 47. ATP-binding residues include tyrosine 50 and lysine 89. Glutamate 91 provides a ligand contact to Mg(2+). Substrate-binding positions include 92–95 (SHNH) and arginine 114. Histidine 93 (proton acceptor) is an active-site residue. Aspartate 115 is a Mg(2+) binding site. Glutamine 238 contributes to the substrate binding site. Residue aspartate 266 participates in Mg(2+) binding. Residue 310–312 (ESQ) coordinates substrate. Residues aspartate 488 and glycine 525 each coordinate ATP. Residue asparagine 526 coordinates Mg(2+). Position 528 (serine 528) interacts with substrate.

This sequence belongs to the FGAMS family. In terms of assembly, monomer. Part of the FGAM synthase complex composed of 1 PurL, 1 PurQ and 2 PurS subunits.

The protein resides in the cytoplasm. It carries out the reaction N(2)-formyl-N(1)-(5-phospho-beta-D-ribosyl)glycinamide + L-glutamine + ATP + H2O = 2-formamido-N(1)-(5-O-phospho-beta-D-ribosyl)acetamidine + L-glutamate + ADP + phosphate + H(+). It functions in the pathway purine metabolism; IMP biosynthesis via de novo pathway; 5-amino-1-(5-phospho-D-ribosyl)imidazole from N(2)-formyl-N(1)-(5-phospho-D-ribosyl)glycinamide: step 1/2. Part of the phosphoribosylformylglycinamidine synthase complex involved in the purines biosynthetic pathway. Catalyzes the ATP-dependent conversion of formylglycinamide ribonucleotide (FGAR) and glutamine to yield formylglycinamidine ribonucleotide (FGAM) and glutamate. The FGAM synthase complex is composed of three subunits. PurQ produces an ammonia molecule by converting glutamine to glutamate. PurL transfers the ammonia molecule to FGAR to form FGAM in an ATP-dependent manner. PurS interacts with PurQ and PurL and is thought to assist in the transfer of the ammonia molecule from PurQ to PurL. In Cereibacter sphaeroides (strain ATCC 17025 / ATH 2.4.3) (Rhodobacter sphaeroides), this protein is Phosphoribosylformylglycinamidine synthase subunit PurL.